We begin with the raw amino-acid sequence, 443 residues long: Probable cytosolic iron-sulfur protein assembly protein 1 (443 aa).

Disordered stretches follow at residues 1-27 (MSDP…WQTA) and 95-124 (REEQ…DDDE). The span at 8–21 (TLSPLATLTPPSSS) shows a compositional bias: low complexity. WD repeat units lie at residues 14-57 (TLTP…LLHS) and 61-103 (GHKR…GNED). Over residues 113–124 (AEDEDGRDDDDE) the composition is skewed to acidic residues. WD repeat units follow at residues 135–174 (GHES…NFET), 180–219 (EHDG…WVQV), 221–248 (CIAG…KDFR), 255–294 (SEEQ…RAEN), 323–362 (VHER…QTPN), and 391–440 (AHSV…DPPQ).

The protein belongs to the WD repeat CIA1 family.

Its function is as follows. Essential component of the cytosolic iron-sulfur (Fe/S) protein assembly machinery. Required for the maturation of extramitochondrial Fe/S proteins. This chain is Probable cytosolic iron-sulfur protein assembly protein 1, found in Phaeosphaeria nodorum (strain SN15 / ATCC MYA-4574 / FGSC 10173) (Glume blotch fungus).